The following is a 298-amino-acid chain: ATP synthase F(1) complex subunit gamma, mitochondrial (298 aa).

A mitochondrion-targeting transit peptide spans M1–M25. K39 carries the N6-acetyllysine modification. K49 carries the post-translational modification N6-succinyllysine. K55 is subject to N6-acetyllysine. N6-acetyllysine; alternate is present on K115. The residue at position 115 (K115) is an N6-succinyllysine; alternate. Residue S146 is modified to Phosphoserine. K154 is modified (N6-acetyllysine; alternate). K154 carries the post-translational modification N6-succinyllysine; alternate. K197 carries the post-translational modification N6-acetyllysine. An N6-succinyllysine modification is found at K270.

It belongs to the ATPase gamma chain family. In terms of assembly, component of the ATP synthase complex composed at least of ATP5F1A/subunit alpha, ATP5F1B/subunit beta, ATP5MC1/subunit c (homooctomer), MT-ATP6/subunit a, MT-ATP8/subunit 8, ATP5ME/subunit e, ATP5MF/subunit f, ATP5MG/subunit g, ATP5MK/subunit k, ATP5MJ/subunit j, ATP5F1C/subunit gamma, ATP5F1D/subunit delta, ATP5F1E/subunit epsilon, ATP5PF/subunit F6, ATP5PB/subunit b, ATP5PD/subunit d, ATP5PO/subunit OSCP. ATP synthase complex consists of a soluble F(1) head domain (subunits alpha(3) and beta(3)) - the catalytic core - and a membrane F(0) domain - the membrane proton channel (subunits c, a, 8, e, f, g, k and j). These two domains are linked by a central stalk (subunits gamma, delta, and epsilon) rotating inside the F1 region and a stationary peripheral stalk (subunits F6, b, d, and OSCP). Interacts with FLVCR2; this interaction occurs in the absence of heme and is disrupted upon heme binding.

It localises to the mitochondrion inner membrane. Its function is as follows. Subunit gamma, of the mitochondrial membrane ATP synthase complex (F(1)F(0) ATP synthase or Complex V) that produces ATP from ADP in the presence of a proton gradient across the membrane which is generated by electron transport complexes of the respiratory chain. ATP synthase complex consist of a soluble F(1) head domain - the catalytic core - and a membrane F(1) domain - the membrane proton channel. These two domains are linked by a central stalk rotating inside the F(1) region and a stationary peripheral stalk. During catalysis, ATP synthesis in the catalytic domain of F(1) is coupled via a rotary mechanism of the central stalk subunits to proton translocation. In vivo, can only synthesize ATP although its ATP hydrolase activity can be activated artificially in vitro. With the central stalk subunit delta, is essential for the biogenesis of F(1) catalytic part of the ATP synthase complex namely in the formation of F1 assembly intermediate. This chain is ATP synthase F(1) complex subunit gamma, mitochondrial, found in Macaca fascicularis (Crab-eating macaque).